Here is an 87-residue protein sequence, read N- to C-terminus: Large ribosomal subunit protein bL27 (87 aa).

The interval Met-1–Leu-21 is disordered.

This sequence belongs to the bacterial ribosomal protein bL27 family.

In Burkholderia mallei (strain NCTC 10247), this protein is Large ribosomal subunit protein bL27.